Consider the following 380-residue polypeptide: Protein GOLM2 (380 aa).

Residue M1 is modified to N-acetylmethionine. Over 1–14 the chain is Cytoplasmic; sequence MVGFGANRRAGRLP. The helical; Signal-anchor for type II membrane protein transmembrane segment at 15–35 threads the bilayer; it reads SLVLAVLLVVIAVLAFNYWSI. Residues 35 to 195 adopt a coiled-coil conformation; the sequence is ISSRHVLLQE…QFLQEQKQEA (161 aa). The Lumenal portion of the chain corresponds to 36 to 380; it reads SSRHVLLQEE…YGKQRFNDAL (345 aa). 2 stretches are compositionally biased toward basic and acidic residues: residues 192-212 and 227-247; these read KQEAHKFESKGGNELDTDNHA and KNEEPSSHHIPHGKEQIKRGG. The interval 192-254 is disordered; that stretch reads KQEAHKFESK…RGGDAGMPGI (63 aa). Phosphoserine is present on residues S233 and S275. The disordered stretch occupies residues 280–380; that stretch reads ESHQVISHLP…YGKQRFNDAL (101 aa). Residues 305–321 show a composition bias toward polar residues; the sequence is NHNGNSRTSKQNPSNPL. Residues 344-380 are compositionally biased toward basic and acidic residues; it reads ATKDRAGDFHKLKQNDEERELQMDPADYGKQRFNDAL.

Belongs to the GOLM family.

Its subcellular location is the membrane. In Bos taurus (Bovine), this protein is Protein GOLM2 (GOLM2).